The primary structure comprises 217 residues: Twisted gastrulation protein homolog 1-A (217 aa).

A signal peptide spans 1 to 26 (MRPALFLCPVLISVLFLLSSLSLISG). N-linked (GlcNAc...) asparagine glycans are attached at residues Asn53 and Asn147.

It belongs to the twisted gastrulation protein family.

The protein resides in the secreted. Its function is as follows. Involved in dorsal-ventral patterning. Appears to function predominantly as a ventralizing factor, through its actions as a BMP signaling agonist, acting through both chd-dependent and chd-independent mechanisms. May also antagonize BMP signaling, probably via formation of ternary complexes with chd and BMPs, resulting in dorsalization. This chain is Twisted gastrulation protein homolog 1-A (twsg1a), found in Danio rerio (Zebrafish).